Consider the following 736-residue polypeptide: 1,4-alpha-glucan branching enzyme GlgB (736 aa).

Asp-415 (nucleophile) is an active-site residue. The active-site Proton donor is Glu-468.

This sequence belongs to the glycosyl hydrolase 13 family. GlgB subfamily. As to quaternary structure, monomer.

It carries out the reaction Transfers a segment of a (1-&gt;4)-alpha-D-glucan chain to a primary hydroxy group in a similar glucan chain.. It functions in the pathway glycan biosynthesis; glycogen biosynthesis. Its function is as follows. Catalyzes the formation of the alpha-1,6-glucosidic linkages in glycogen by scission of a 1,4-alpha-linked oligosaccharide from growing alpha-1,4-glucan chains and the subsequent attachment of the oligosaccharide to the alpha-1,6 position. The polypeptide is 1,4-alpha-glucan branching enzyme GlgB (Rhodopirellula baltica (strain DSM 10527 / NCIMB 13988 / SH1)).